We begin with the raw amino-acid sequence, 230 residues long: 2,3-bisphosphoglycerate-dependent phosphoglycerate mutase (230 aa).

Substrate-binding positions include 8–15 (RHGESEWN), 21–22 (TG), Arg60, 87–90 (ERHY), Lys98, 114–115 (RR), and 183–184 (GN). His9 (tele-phosphohistidine intermediate) is an active-site residue. Residue Glu87 is the Proton donor/acceptor of the active site.

This sequence belongs to the phosphoglycerate mutase family. BPG-dependent PGAM subfamily.

It carries out the reaction (2R)-2-phosphoglycerate = (2R)-3-phosphoglycerate. Its pathway is carbohydrate degradation; glycolysis; pyruvate from D-glyceraldehyde 3-phosphate: step 3/5. Functionally, catalyzes the interconversion of 2-phosphoglycerate and 3-phosphoglycerate. In Streptococcus gordonii (strain Challis / ATCC 35105 / BCRC 15272 / CH1 / DL1 / V288), this protein is 2,3-bisphosphoglycerate-dependent phosphoglycerate mutase.